The following is a 354-amino-acid chain: Fructose-bisphosphate aldolase (354 aa).

Ser50 serves as a coordination point for D-glyceraldehyde 3-phosphate. Residue Asp83 is the Proton donor of the active site. His84, Asp105, Glu142, and His198 together coordinate Zn(2+). Gly199 contacts dihydroxyacetone phosphate. Zn(2+) is bound at residue His232. Residues 233–235 (GSS) and 275–278 (NIDT) each bind dihydroxyacetone phosphate.

The protein belongs to the class II fructose-bisphosphate aldolase family. Zn(2+) serves as cofactor.

The catalysed reaction is beta-D-fructose 1,6-bisphosphate = D-glyceraldehyde 3-phosphate + dihydroxyacetone phosphate. Its pathway is carbohydrate degradation; glycolysis; D-glyceraldehyde 3-phosphate and glycerone phosphate from D-glucose: step 4/4. Its function is as follows. Catalyzes the aldol condensation of dihydroxyacetone phosphate (DHAP or glycerone-phosphate) with glyceraldehyde 3-phosphate (G3P) to form fructose 1,6-bisphosphate (FBP) in gluconeogenesis and the reverse reaction in glycolysis. This is Fructose-bisphosphate aldolase (fba) from Pseudomonas aeruginosa (strain ATCC 15692 / DSM 22644 / CIP 104116 / JCM 14847 / LMG 12228 / 1C / PRS 101 / PAO1).